Consider the following 195-residue polypeptide: Adenylate kinase (195 aa).

8 to 16 (GIPGVGKTT) is a binding site for ATP.

The protein belongs to the archaeal adenylate kinase family. In terms of assembly, homotrimer.

Its subcellular location is the cytoplasm. It carries out the reaction AMP + ATP = 2 ADP. In Saccharolobus solfataricus (strain ATCC 35092 / DSM 1617 / JCM 11322 / P2) (Sulfolobus solfataricus), this protein is Adenylate kinase (adkA).